We begin with the raw amino-acid sequence, 382 residues long: Succinate--CoA ligase [ADP-forming] subunit beta (382 aa).

Residues 9–237 (RDLLARYGIP…PSAEPEAERR (229 aa)) enclose the ATP-grasp domain. Residues Lys45, 52–54 (GRG), Ile94, and Glu99 contribute to the ATP site. Residues Asn192 and Asp206 each contribute to the Mg(2+) site. Substrate is bound by residues Asn257 and 314–316 (GIT).

The protein belongs to the succinate/malate CoA ligase beta subunit family. In terms of assembly, heterotetramer of two alpha and two beta subunits. Mg(2+) serves as cofactor.

The catalysed reaction is succinate + ATP + CoA = succinyl-CoA + ADP + phosphate. The enzyme catalyses GTP + succinate + CoA = succinyl-CoA + GDP + phosphate. It participates in carbohydrate metabolism; tricarboxylic acid cycle; succinate from succinyl-CoA (ligase route): step 1/1. Its function is as follows. Succinyl-CoA synthetase functions in the citric acid cycle (TCA), coupling the hydrolysis of succinyl-CoA to the synthesis of either ATP or GTP and thus represents the only step of substrate-level phosphorylation in the TCA. The beta subunit provides nucleotide specificity of the enzyme and binds the substrate succinate, while the binding sites for coenzyme A and phosphate are found in the alpha subunit. This is Succinate--CoA ligase [ADP-forming] subunit beta from Chloroflexus aggregans (strain MD-66 / DSM 9485).